The sequence spans 182 residues: MRALLLIISFCLVAVLQAQDSSFLAFNNGNFSGKWFLKALVSEDDIPINKVSPMLILVLNNGDIELSITHMIYDQCLEVTTILEKTDVPGQYLAFEGKTHLQVQLSSVKGHYMLYCDGEIEGMRFLMTQLIGRDPQENLEALEEFKVFTQIKGLVAENLVILEQMEKCEPESFYELPSRPSE.

The N-terminal stretch at 1–18 (MRALLLIISFCLVAVLQA) is a signal peptide. Asparagine 30 is a glycosylation site (N-linked (GlcNAc...) asparagine). An intrachain disulfide couples cysteine 76 to cysteine 168.

The protein belongs to the calycin superfamily. Lipocalin family. Specifically expressed in vomeronasal and posterior glands of the nasal septum, the ducts of which open into the lumen of the vomeronasal organ.

The protein resides in the secreted. Transport of lipophilic molecules, possible pheromone-carrier. The sequence is that of Vomeronasal secretory protein 1 (Lcn3) from Mus musculus (Mouse).